Reading from the N-terminus, the 184-residue chain is Probable chemoreceptor glutamine deamidase CheD (184 aa).

The protein belongs to the CheD family.

It catalyses the reaction L-glutaminyl-[protein] + H2O = L-glutamyl-[protein] + NH4(+). Its function is as follows. Probably deamidates glutamine residues to glutamate on methyl-accepting chemotaxis receptors (MCPs), playing an important role in chemotaxis. The protein is Probable chemoreceptor glutamine deamidase CheD of Rhizobium etli (strain CIAT 652).